We begin with the raw amino-acid sequence, 171 residues long: Nucleoside-triphosphatase THEP1 (171 aa).

Residues 8-15 and 95-102 contribute to the ATP site; these read GPPGAGKS and VYLIDEIG.

The protein belongs to the THEP1 NTPase family.

It catalyses the reaction a ribonucleoside 5'-triphosphate + H2O = a ribonucleoside 5'-diphosphate + phosphate + H(+). Has nucleotide phosphatase activity towards ATP, GTP, CTP, TTP and UTP. May hydrolyze nucleoside diphosphates with lower efficiency. This chain is Nucleoside-triphosphatase THEP1, found in Ignicoccus hospitalis (strain KIN4/I / DSM 18386 / JCM 14125).